Consider the following 363-residue polypeptide: Peptide chain release factor 1 (363 aa).

Residue Gln-236 is modified to N5-methylglutamine. Residues 286 to 305 are disordered; the sequence is KKEMERSTMRKSQIGSGDRS.

Belongs to the prokaryotic/mitochondrial release factor family. In terms of processing, methylated by PrmC. Methylation increases the termination efficiency of RF1.

Its subcellular location is the cytoplasm. In terms of biological role, peptide chain release factor 1 directs the termination of translation in response to the peptide chain termination codons UAG and UAA. The sequence is that of Peptide chain release factor 1 from Wolbachia pipientis subsp. Culex pipiens (strain wPip).